The primary structure comprises 158 residues: NADH-quinone oxidoreductase subunit B (158 aa).

[4Fe-4S] cluster-binding residues include C37, C38, C102, and C132.

It belongs to the complex I 20 kDa subunit family. As to quaternary structure, NDH-1 is composed of 14 different subunits. Subunits NuoB, C, D, E, F, and G constitute the peripheral sector of the complex. Requires [4Fe-4S] cluster as cofactor.

Its subcellular location is the cell inner membrane. It catalyses the reaction a quinone + NADH + 5 H(+)(in) = a quinol + NAD(+) + 4 H(+)(out). In terms of biological role, NDH-1 shuttles electrons from NADH, via FMN and iron-sulfur (Fe-S) centers, to quinones in the respiratory chain. The immediate electron acceptor for the enzyme in this species is believed to be ubiquinone. Couples the redox reaction to proton translocation (for every two electrons transferred, four hydrogen ions are translocated across the cytoplasmic membrane), and thus conserves the redox energy in a proton gradient. The polypeptide is NADH-quinone oxidoreductase subunit B (Thiobacillus denitrificans (strain ATCC 25259 / T1)).